The following is a 504-amino-acid chain: Anaerobic nitric oxide reductase transcription regulator NorR (504 aa).

D57 carries the 4-aspartylphosphate modification. One can recognise a Sigma-54 factor interaction domain in the interval 187-416; the sequence is MIGLSPGMTQ…LEHAIHRAVV (230 aa). Residues 215–222 and 278–287 contribute to the ATP site; these read GETGTGKE and ADNGTLFLDE. Residues 479–498 constitute a DNA-binding region (H-T-H motif); it reads WAACARMLETDVANLHRLAK.

Its pathway is nitrogen metabolism; nitric oxide reduction. Its function is as follows. Required for the expression of anaerobic nitric oxide (NO) reductase, acts as a transcriptional activator for at least the norVW operon. Activation also requires sigma-54. This chain is Anaerobic nitric oxide reductase transcription regulator NorR, found in Escherichia coli (strain 55989 / EAEC).